A 210-amino-acid polypeptide reads, in one-letter code: Probable GTP-binding protein EngB (210 aa).

Residues 25-199 (TGIEVAFAGR…RQKLDSWFNE (175 aa)) form the EngB-type G domain. Residues 33–40 (GRSNAGKS), 60–64 (GRTQL), 78–81 (DLPG), 145–148 (TKAD), and 178–180 (FSS) each bind GTP. Positions 40 and 62 each coordinate Mg(2+).

The protein belongs to the TRAFAC class TrmE-Era-EngA-EngB-Septin-like GTPase superfamily. EngB GTPase family. Mg(2+) serves as cofactor.

Its function is as follows. Necessary for normal cell division and for the maintenance of normal septation. The protein is Probable GTP-binding protein EngB of Klebsiella pneumoniae (strain 342).